The primary structure comprises 526 residues: Keratin, type I cytoskeletal 10 (526 aa).

The span at 1–15 (MSVRYSSSKQYSSSR) shows a compositional bias: low complexity. The tract at residues 1–29 (MSVRYSSSKQYSSSRSGGGGGGGSSLRIS) is disordered. Positions 1–126 (MSVRYSSSKQ…FGDGGLISGN (126 aa)) are head. Residues Ser14, Ser16, Ser34, Ser45, Ser48, and Ser151 each carry the phosphoserine modification. The coil 1A stretch occupies residues 127 to 162 (QKITMQNLNDRLASYLDKVRALEESNYELEVKIKEW). Residues 127–441 (QKITMQNLND…SLLEGEGSSG (315 aa)) form the IF rod domain. The interval 163–183 (YEKYGNSRQREPRDYSKYYQT) is linker 1. The interval 184–275 (IDDLKNQIFN…KNHEEEMRDL (92 aa)) is coil 1B. Residues 276 to 298 (QNVSTGDVNVEMNAAPGVDLTEL) are linker 12. Residues 299–437 (LNNMRSQYEQ…QTYRSLLEGE (139 aa)) are coil 2. The tail stretch occupies residues 438-526 (GSSGGGSYGG…GESSSKGPRY (89 aa)). Gly residues predominate over residues 458 to 505 (GGGGYGGGSSSGGYGGGSSSGGGHGGSSGGSYGGGSSSGGGHGGGSSS). The interval 458 to 526 (GGGGYGGGSS…GESSSKGPRY (69 aa)) is disordered. The segment covering 506-526 (GGHKSTTTGSVGESSSKGPRY) has biased composition (low complexity).

It belongs to the intermediate filament family. As to quaternary structure, heterotetramer of two type I and two type II keratins. Heterodimer with KRT1. Two heterodimers of KRT1 and KRT10 form a heterotetramer. The KRT10 subunit in the heterotetramer is probably disulfide-linked.

The protein resides in the secreted. It localises to the extracellular space. It is found in the cell surface. Its subcellular location is the cytoplasm. In terms of biological role, plays a role in the establishment of the epidermal barrier on plantar skin. Involved in the maintenance of cell layer development and keratin filament bundles in suprabasal cells of the epithelium. The protein is Keratin, type I cytoskeletal 10 (KRT10) of Bos taurus (Bovine).